A 931-amino-acid polypeptide reads, in one-letter code: Protein phosphatase 1 regulatory subunit 37 homolog (931 aa).

Residues 20–71 (TAASSPASPIPPTSPSMFATPPHQQSHSSATSVRKKVCQEANSSADDPDSDA) are disordered. The span at 41-51 (PHQQSHSSATS) shows a compositional bias: polar residues. LRR repeat units lie at residues 232–259 (AISL…LARA), 262–285 (SASL…VLIC), 290–314 (NTGI…IYQL), 323–346 (LLDL…LRNR), 351–374 (KSAL…SLAE), 379–407 (NTKI…LVSN), 409–430 (HLHR…ILAE), and 435–458 (NTAL…ALHS). Over residues 519–533 (QDHVSEDTEKENKDA) the composition is skewed to basic and acidic residues. Disordered stretches follow at residues 519–602 (QDHV…RHQR) and 780–807 (PDCT…IRQR). Acidic residues predominate over residues 534 to 547 (DNDDKEPENEDGDT). A compositionally biased stretch (low complexity) spans 554 to 563 (SDASADQSDS). 2 stretches are compositionally biased toward basic and acidic residues: residues 564-584 (PADK…EKRP) and 790-807 (TTSR…IRQR).

This sequence belongs to the PPP1R37 family.

In Caenorhabditis briggsae, this protein is Protein phosphatase 1 regulatory subunit 37 homolog.